Here is a 306-residue protein sequence, read N- to C-terminus: Curved DNA-binding protein (306 aa).

The J domain occupies 5 to 69 (DYYAIMGVKP…QRRAEYDQMW (65 aa)).

The protein resides in the cytoplasm. It is found in the nucleoid. Functionally, DNA-binding protein that preferentially recognizes a curved DNA sequence. It is probably a functional analog of DnaJ; displays overlapping activities with DnaJ, but functions under different conditions, probably acting as a molecular chaperone in an adaptive response to environmental stresses other than heat shock. Lacks autonomous chaperone activity; binds native substrates and targets them for recognition by DnaK. Its activity is inhibited by the binding of CbpM. The sequence is that of Curved DNA-binding protein from Shigella dysenteriae serotype 1 (strain Sd197).